Here is a 1639-residue protein sequence, read N- to C-terminus: Mediator of RNA polymerase II transcription subunit 14 (1639 aa).

Positions 49 to 53 (LAELL) match the LXXLL motif 1 motif. Disordered stretches follow at residues 561–586 (GQSP…GSDS) and 709–755 (LPQP…KTVH). Over residues 575–586 (SAAGGPAPGSDS) the composition is skewed to low complexity. Pro residues predominate over residues 711–721 (QPKPPQAPPTP). Residues 722–748 (QQQQQQQQQQQQPGTSDAKSSGAGASA) show a composition bias toward low complexity. Positions 768 to 772 (LKRLL) match the LXXLL motif 2 motif. 2 disordered regions span residues 1039 to 1243 (RRSQ…HHYT) and 1558 to 1639 (MQPG…GGPN). 2 stretches are compositionally biased toward gly residues: residues 1062–1088 (GNNG…GTGM) and 1122–1142 (IGGG…GQGG). Residues 1189–1201 (GPSSLSYMQSHTD) are compositionally biased toward polar residues. A compositionally biased stretch (pro residues) spans 1219–1229 (PGMPRPSPRPG). Residues 1558-1579 (MQPGGGPGVPGGPGGPMGGQIG) are compositionally biased toward gly residues. Over residues 1589–1603 (VGSSPSPMMHSPMQQ) the composition is skewed to low complexity. Residues 1604–1639 (MGGGGPQPGAYGGMVGGPGGGPQSGGPVGGGPGGPN) show a composition bias toward gly residues.

It belongs to the Mediator complex subunit 14 family. Component of the Mediator complex.

It localises to the nucleus. Its function is as follows. Component of the Mediator complex, a coactivator involved in the regulated transcription of nearly all RNA polymerase II-dependent genes. Mediator functions as a bridge to convey information from gene-specific regulatory proteins to the basal RNA polymerase II transcription machinery. Mediator is recruited to promoters by direct interactions with regulatory proteins and serves as a scaffold for the assembly of a functional preinitiation complex with RNA polymerase II and the general transcription factors. This chain is Mediator of RNA polymerase II transcription subunit 14 (MED14), found in Anopheles gambiae (African malaria mosquito).